The sequence spans 549 residues: MTVHSTWKEKVQLKKDQLNSKIKDEWKLNSTTITRLKNDKKNLIKNIDDLCSSSENQITHSTIMALRQALEAKELSCHEITAAFCHRAALIHQVVNCLSEIMFSEALRLADYYDSNRPAILPPLYGIPISLKDQCNVEGVDTSLGYLCRTFKPKTKNEESLIVSFLRDLGAIIFVKTTVPSSMMATDTQSNTFGYTYNSINLSFSSGGSSGGEGSLIGAHGSLLGLGTDIGGSIRIPSSYQGLFGLKPTFGRVPYLRVDNSFEGRETIPSVIGPLARDLSDLRYFMSCVINICQPWVQDVKCIPYHFDSSTSKLHDNYVVGIWYGDGVIDPPPSDIRALKTCEDLVNKTKGMKAVKWEPSSELSRELFDLANEADVADSGNEIKNEFEISGEPLLDILKPMVLENGRPPYTVNEWWDLTKRVYNAQQLMRDYYLSFPESERPDVIISPTTLMPFRPGDMLKTTLRYILLFNVLNFPSLSIPVGSVDCQIDGLMDTTSALNPEDKMIKTYWNDLIQSGEIDGFPIGLQVVSPTFNDNEVCKFASWLFSKI.

Active-site charge relay system residues include Lys132 and Ser209. Catalysis depends on Ser233, which acts as the Acyl-ester intermediate.

This sequence belongs to the amidase family.

The catalysed reaction is a monocarboxylic acid amide + H2O = a monocarboxylate + NH4(+). The protein is Probable amidase (AMD2) of Saccharomyces cerevisiae (strain ATCC 204508 / S288c) (Baker's yeast).